We begin with the raw amino-acid sequence, 366 residues long: Carboxy-cis,cis-muconate cyclase (366 aa).

Residues His-149, Arg-197, Glu-213, and Arg-275 contribute to the active site.

It belongs to the cycloisomerase 2 family. Homotetramer.

It catalyses the reaction 3-carboxy-2,5-dihydro-5-oxofuran-2-acetate = 3-carboxy-cis,cis-muconate. It participates in aromatic compound metabolism; beta-ketoadipate pathway; 3-carboxy-cis,cis-muconate from 3-carboxy-2,5-dihydro-5-oxofuran-2-acetate: step 1/1. Its function is as follows. Catalyzes a syn cycloisomerization. Also possesses mle activity. The sequence is that of Carboxy-cis,cis-muconate cyclase from Neurospora crassa (strain ATCC 24698 / 74-OR23-1A / CBS 708.71 / DSM 1257 / FGSC 987).